Reading from the N-terminus, the 928-residue chain is Eukaryotic translation initiation factor 3 subunit C (928 aa).

2 disordered regions span residues 1-37 (MSRF…SDDE) and 157-286 (FREA…EDGE). Acidic residues predominate over residues 11-20 (SESESSEEEV). The segment covering 22-33 (TQFNNKAQNFQF) has biased composition (polar residues). A phosphoserine mark is found at S34, S165, S177, and S186. Residues 162 to 171 (DQESDVDEGE) show a composition bias toward acidic residues. Basic and acidic residues predominate over residues 172-184 (GDVHDSDADRAGD). Over residues 215–240 (DDDDSEDSIDWDPDTESETESSEDEN) the composition is skewed to acidic residues. Positions 245-264 (MRERFLKRTTEKEDKDDDKR) are enriched in basic and acidic residues. Positions 265-277 (KDKRKEQKHKVRK) are enriched in basic residues. Residues 656-832 (FHMHINLELL…ETVVMHRSEP (177 aa)) enclose the PCI domain. Positions 864 to 928 (FFQRGNMGNR…QQQVHTIDEE (65 aa)) are disordered. Basic residues predominate over residues 898-909 (QRNRNQRGHHKQ). A compositionally biased stretch (low complexity) spans 910–921 (NQQQNQQQQQQQ).

It belongs to the eIF-3 subunit C family. Component of the eukaryotic translation initiation factor 3 (eIF-3) complex. The eIF-3 complex interacts with pix.

It localises to the cytoplasm. Functionally, component of the eukaryotic translation initiation factor 3 (eIF-3) complex, which is involved in protein synthesis of a specialized repertoire of mRNAs and, together with other initiation factors, stimulates binding of mRNA and methionyl-tRNAi to the 40S ribosome. The eIF-3 complex specifically targets and initiates translation of a subset of mRNAs involved in cell proliferation. The protein is Eukaryotic translation initiation factor 3 subunit C of Drosophila grimshawi (Hawaiian fruit fly).